The chain runs to 480 residues: Na(+)/H(+) antiporter NhaA (480 aa).

11 helical membrane passes run 34 to 54 (VGGV…NIPA), 76 to 96 (LSVA…VAGI), 113 to 133 (AVLP…VYTL), 144 to 164 (GWAV…AVIG), 174 to 194 (FLLT…AIFF), 197 to 217 (RINF…WLLL), 223 to 243 (GWYV…NSGV), 282 to 302 (GLAV…GGAL), 312 to 332 (LGVV…STWL), 350 to 370 (IFAV…IGEL), and 381 to 401 (EVKA…TVLL). Positions 454–480 (AAEKAAAARHGGAEVPGGAGEEDGRPA) are disordered.

The protein belongs to the NhaA Na(+)/H(+) (TC 2.A.33) antiporter family.

Its subcellular location is the cell membrane. It catalyses the reaction Na(+)(in) + 2 H(+)(out) = Na(+)(out) + 2 H(+)(in). Its function is as follows. Na(+)/H(+) antiporter that extrudes sodium in exchange for external protons. This chain is Na(+)/H(+) antiporter NhaA, found in Streptomyces antibioticus.